The sequence spans 497 residues: Succinate-semialdehyde dehydrogenase [NADP(+)] (497 aa).

The active-site Proton acceptor is Glu264. The Nucleophile role is filled by Cys298.

The protein belongs to the aldehyde dehydrogenase family. As to quaternary structure, homotetramer.

The protein localises to the cytoplasm. The catalysed reaction is succinate semialdehyde + NAD(+) + H2O = succinate + NADH + 2 H(+). It carries out the reaction succinate semialdehyde + NADP(+) + H2O = succinate + NADPH + 2 H(+). The protein operates within amino-acid degradation; 4-aminobutanoate degradation. Inhibited by AMP, ADP anf ATP. Catalyzes the oxidation of succinate semialdehyde to succinate. Can utilize both NAD(+) or NADP(+) as a coenzyme, but has a 2.5-fold lower activity with NADP(+) than with NAD(+). Functions in a gamma-aminobutyrate (GABA) degradation pathway that allows growth utilizing GABA as a nitrogen source. Functions in the GABA shunt, which allows to bypass 2 reactions in the TCA cycle by removing alpha-ketoglutarate from the cycle and feeding succinate and NADH back into the cycle. This chain is Succinate-semialdehyde dehydrogenase [NADP(+)], found in Saccharomyces cerevisiae (strain ATCC 204508 / S288c) (Baker's yeast).